Here is a 160-residue protein sequence, read N- to C-terminus: MSYNCCSRNFSSRSFGGYLYYPGSCPSSLVYSTALCSPSTCQLGSSLYRDCQKTCWEPASCQKSCYHPRTSMLCCPCQTTCSGSLGFGSSSCRSQGYGSRSCYSLGNGSSGFRFLKYGGCGFPSLSYGSRFCYPNYLASGAWQSSCYRPICGSRFYQFTC.

A run of 4 repeats spans residues 41 to 50 (CQLGSSLYRD), 51 to 60 (CQKTCWEPAS), 61 to 70 (CQKSCYHPRT), and 77 to 86 (CQTTCSGSLG). Residues 41–86 (CQLGSSLYRDCQKTCWEPASCQKSCYHPRTSMLCCPCQTTCSGSLG) form a 4 X 10 AA approximate repeats region.

The protein belongs to the PMG family. As to quaternary structure, interacts with hair keratins.

Functionally, in the hair cortex, hair keratin intermediate filaments are embedded in an interfilamentous matrix, consisting of hair keratin-associated proteins (KRTAP), which are essential for the formation of a rigid and resistant hair shaft through their extensive disulfide bond cross-linking with abundant cysteine residues of hair keratins. The matrix proteins include the high-sulfur and high-glycine-tyrosine keratins. In Hylobates agilis (Agile gibbon), this protein is Keratin-associated protein 13-4 (KRTAP13-4).